Consider the following 472-residue polypeptide: MERKTVLVIADLGGCPPHMFYESAAEKYNLVSFIPRPFAITASHAALIEKYSIAVIKDKDYFKSLADFEHPDSIYWAHEDHDKPEEEVVEEIVKVADMFAVDAITTNNELFIAPMAKACKRLGLRGAGVQAAENARDKNKMRAAFNRAGVKSIKNKRVTTLEDFRAALQEIGTPLILKPTYLASSIGVTLIKEMETAEAEFNRVNEYLKSINVPKAVTFEAPFIAEEFLQGEYDDWYETSGYSDYISIEGIMADGEYFPVAIHDKTPQIGFTETAHITPSILDDDAKRKIVEAAKKANEGLGLENCATHTEIKLMKNREAGLIESAPRFAGWNMIPNIKKVFGVDMAQLLLDVLCFGKEADLPKGLLEQEPCYVADCHLYPQHFKENGQLPETVVDFVIESIEIPDGVLKGDTELVSFSAAEAGTSVDLRLFEAFNSIAAFELKGSNSNDVAESIKQIQQQAKLTAKYALSV.

Glu109 is a binding site for Mg(2+). The ATP site is built by Lys138 and Lys178. Positions 142–355 constitute an ATP-grasp domain; that stretch reads RAAFNRAGVK…MAQLLLDVLC (214 aa). Leu182 is a Mg(2+) binding site. Residues 184–185, 226–229, and Gln268 contribute to the ATP site; these read SS and EEFL. Substrate is bound by residues Glu273 and 309-311; that span reads HTE. Mg(2+) is bound by residues Glu311 and Glu324. A substrate-binding site is contributed by 328-331; that stretch reads RFAG.

In terms of assembly, monomer or homodimer. Mg(2+) serves as cofactor.

The catalysed reaction is L-anticapsin + L-alanine + ATP = bacilysin + ADP + phosphate + H(+). The protein operates within antibiotic biosynthesis; bacilysin biosynthesis. Functionally, part of the bacABCDEFG operon responsible for the biosynthesis of bacilysin, an irreversible inactivator of the glutaminase domain of glucosamine synthetase. Catalyzes the formation of alpha-dipeptides from various L-amino acids in the presence of ATP. In vivo catalyzes the ligation of L-alanine and L-anticapsin (epoxycyclohexanonyl-Ala) to produce the final bacilysin antibiotic (L-Ala-L-4S-cyclohexenonyl-Ala dipeptide). This chain is Alanine--anticapsin ligase, found in Bacillus amyloliquefaciens (Bacillus velezensis).